Reading from the N-terminus, the 148-residue chain is 3-dehydroquinate dehydratase (148 aa).

Tyr24 acts as the Proton acceptor in catalysis. Substrate contacts are provided by Asn75, His81, and Asp88. The active-site Proton donor is His101. Substrate contacts are provided by residues Leu102–Ser103 and Arg112.

This sequence belongs to the type-II 3-dehydroquinase family. In terms of assembly, homododecamer.

The catalysed reaction is 3-dehydroquinate = 3-dehydroshikimate + H2O. Its pathway is metabolic intermediate biosynthesis; chorismate biosynthesis; chorismate from D-erythrose 4-phosphate and phosphoenolpyruvate: step 3/7. Catalyzes a trans-dehydration via an enolate intermediate. The protein is 3-dehydroquinate dehydratase of Bartonella henselae (strain ATCC 49882 / DSM 28221 / CCUG 30454 / Houston 1) (Rochalimaea henselae).